Consider the following 690-residue polypeptide: Elongation factor G (690 aa).

Residues 8-283 (DKYRNIGIMA…AVVDFLPSPL (276 aa)) enclose the tr-type G domain. GTP-binding positions include 17 to 24 (AHIDAGKT), 81 to 85 (DTPGH), and 135 to 138 (NKLD).

The protein belongs to the TRAFAC class translation factor GTPase superfamily. Classic translation factor GTPase family. EF-G/EF-2 subfamily.

The protein resides in the cytoplasm. In terms of biological role, catalyzes the GTP-dependent ribosomal translocation step during translation elongation. During this step, the ribosome changes from the pre-translocational (PRE) to the post-translocational (POST) state as the newly formed A-site-bound peptidyl-tRNA and P-site-bound deacylated tRNA move to the P and E sites, respectively. Catalyzes the coordinated movement of the two tRNA molecules, the mRNA and conformational changes in the ribosome. The polypeptide is Elongation factor G (Zymomonas mobilis subsp. mobilis (strain ATCC 31821 / ZM4 / CP4)).